A 989-amino-acid chain; its full sequence is Zinc finger SWIM domain-containing protein 4 (989 aa).

A disordered region spans residues 1–32 (MEPPAAKRSRGCPAGPEERDAGAGAARGRGRP). An SWIM-type zinc finger spans residues 139–176 (YHVSISFDRCKITSVSCGCDNRDLFYCAHVVALSLYRI).

This is Zinc finger SWIM domain-containing protein 4 (ZSWIM4) from Homo sapiens (Human).